An 85-amino-acid chain; its full sequence is Large ribosomal subunit protein bL27 (85 aa).

The segment at 1 to 20 (MATKKAGGSTRNGRDSEAKR) is disordered.

It belongs to the bacterial ribosomal protein bL27 family.

In Pasteurella multocida (strain Pm70), this protein is Large ribosomal subunit protein bL27.